Here is a 20-residue protein sequence, read N- to C-terminus: Phospholipase A2 homolog P-elapitoxin-Aa1a gamma chain (20 aa).

The protein belongs to the phospholipase A2 family. Group I subfamily. Heterotrimer of alpha, beta and gamma chains, each related to PLA2. Post-translationally, glycosylated. Expressed by the venom gland.

The protein localises to the secreted. In terms of biological role, heterotrimer: Snake venom phospholipase A2 (PLA2) that has presynaptic neurotoxicity. Inhibits nerve-evoked twitch contractions but not responses to cholinergic agonists acetylcholine and carbachol and to depolarizing agonist KCl. Causes a fade in tetanic contractions. Displays a triphasic mode of action with depression, enhancement and blockade of neurotransmission. Does not display myotoxic activity such as changes in baseline muscle tension or inhibition of directly stimulated muscle twitches. All subunits are necessary for maximum toxicity. Its function is as follows. Monomer: the gamma chain has no significant enzymatic activity and is not toxic by itself. The sequence is that of Phospholipase A2 homolog P-elapitoxin-Aa1a gamma chain from Acanthophis antarcticus (Common death adder).